Consider the following 306-residue polypeptide: Pantothenate kinase (306 aa).

91 to 98 serves as a coordination point for ATP; it reads GSVAVGKS.

This sequence belongs to the prokaryotic pantothenate kinase family.

It is found in the cytoplasm. It catalyses the reaction (R)-pantothenate + ATP = (R)-4'-phosphopantothenate + ADP + H(+). It functions in the pathway cofactor biosynthesis; coenzyme A biosynthesis; CoA from (R)-pantothenate: step 1/5. This chain is Pantothenate kinase, found in Streptococcus pneumoniae serotype 19F (strain G54).